Consider the following 77-residue polypeptide: Translation initiation factor IF-1, chloroplastic (77 aa).

In terms of domain architecture, S1-like spans 1-71; sequence MKEQKWIHEG…TRGRIIYRLR (71 aa).

The protein belongs to the IF-1 family. As to quaternary structure, component of the 30S ribosomal translation pre-initiation complex which assembles on the 30S ribosome in the order IF-2 and IF-3, IF-1 and N-formylmethionyl-tRNA(fMet); mRNA recruitment can occur at any time during PIC assembly.

The protein resides in the plastid. It is found in the chloroplast. One of the essential components for the initiation of protein synthesis. Stabilizes the binding of IF-2 and IF-3 on the 30S subunit to which N-formylmethionyl-tRNA(fMet) subsequently binds. Helps modulate mRNA selection, yielding the 30S pre-initiation complex (PIC). Upon addition of the 50S ribosomal subunit IF-1, IF-2 and IF-3 are released leaving the mature 70S translation initiation complex. The protein is Translation initiation factor IF-1, chloroplastic of Daucus carota (Wild carrot).